An 86-amino-acid chain; its full sequence is Small ribosomal subunit protein bS20 (86 aa).

The disordered stretch occupies residues 1 to 26 (MANIKSAKKRALQSEKSRKHNASRRT).

It belongs to the bacterial ribosomal protein bS20 family.

Binds directly to 16S ribosomal RNA. The chain is Small ribosomal subunit protein bS20 from Psychromonas ingrahamii (strain DSM 17664 / CCUG 51855 / 37).